The chain runs to 437 residues: Homogentisate 1,2-dioxygenase (437 aa).

The interval 15–34 is disordered; sequence NEHATSDPRVPDALPVGQNS. 3 residues coordinate Fe cation: histidine 336, glutamate 342, and histidine 372.

This sequence belongs to the homogentisate dioxygenase family. Fe cation is required as a cofactor. In terms of tissue distribution, expressed in the hypodermis and intestine.

It carries out the reaction homogentisate + O2 = 4-maleylacetoacetate + H(+). The protein operates within amino-acid degradation; L-phenylalanine degradation; acetoacetate and fumarate from L-phenylalanine: step 4/6. Its function is as follows. Plays a role in the tyrosine degradation pathway. The sequence is that of Homogentisate 1,2-dioxygenase from Caenorhabditis elegans.